A 109-amino-acid polypeptide reads, in one-letter code: Putative double-stranded DNA mimic protein YciU (109 aa).

Belongs to the putative dsDNA mimic protein family.

In terms of biological role, may act as a double-stranded DNA (dsDNA) mimic. Probably regulates the activity of a dsDNA-binding protein. The sequence is that of Putative double-stranded DNA mimic protein YciU from Shigella flexneri.